The primary structure comprises 339 residues: Thermospermine synthase ACAULIS5 (339 aa).

Residues 33 to 270 form the PABS domain; sequence CHWYEETIDD…DTWGWVMASD (238 aa). Residues Gln-62, Glu-117, Asp-137, and 168 to 169 contribute to the S-adenosyl 3-(methylsulfanyl)propylamine site; that span reads DA. Catalysis depends on Asp-186, which acts as the Proton acceptor.

It belongs to the spermidine/spermine synthase family. As to expression, highly expressed in stem internodes and roots. Lower levels in young seedlings before flowering and rosette leaves. Expressed in the vascular tissues. Restricted to procambial and/or provascular cells during primary root development and early leaves development.

The catalysed reaction is S-adenosyl 3-(methylsulfanyl)propylamine + spermidine = thermospermine + S-methyl-5'-thioadenosine + H(+). Required for correct xylem specification through regulation of the lifetime of the xylem elements. Prevents premature death of the xylem vessel elements. This is Thermospermine synthase ACAULIS5 (ACL5) from Arabidopsis thaliana (Mouse-ear cress).